Reading from the N-terminus, the 719-residue chain is Polyribonucleotide nucleotidyltransferase (719 aa).

2 residues coordinate Mg(2+): D507 and D513. The region spanning P573–I633 is the KH domain. The S1 motif domain occupies G658 to E719.

This sequence belongs to the polyribonucleotide nucleotidyltransferase family. It depends on Mg(2+) as a cofactor.

It localises to the cytoplasm. The enzyme catalyses RNA(n+1) + phosphate = RNA(n) + a ribonucleoside 5'-diphosphate. Functionally, involved in mRNA degradation. Catalyzes the phosphorolysis of single-stranded polyribonucleotides processively in the 3'- to 5'-direction. The chain is Polyribonucleotide nucleotidyltransferase from Campylobacter jejuni (strain RM1221).